A 476-amino-acid polypeptide reads, in one-letter code: Eukaryotic translation initiation factor 3 subunit L (476 aa).

The PCI domain maps to 257-452 (DAIRMFSHIL…DLDYALENDL (196 aa)).

Belongs to the eIF-3 subunit L family. In terms of assembly, component of the eukaryotic translation initiation factor 3 (eIF-3) complex.

It is found in the cytoplasm. Functionally, component of the eukaryotic translation initiation factor 3 (eIF-3) complex, which is involved in protein synthesis of a specialized repertoire of mRNAs and, together with other initiation factors, stimulates binding of mRNA and methionyl-tRNAi to the 40S ribosome. The eIF-3 complex specifically targets and initiates translation of a subset of mRNAs involved in cell proliferation. The chain is Eukaryotic translation initiation factor 3 subunit L from Aspergillus oryzae (strain ATCC 42149 / RIB 40) (Yellow koji mold).